A 611-amino-acid polypeptide reads, in one-letter code: UvrABC system protein C (611 aa).

Positions 6–84 constitute a GIY-YIG domain; the sequence is NNPGVYRMFN…IKRSRPRFNV (79 aa). In terms of domain architecture, UVR spans 194-229; it reads QSVKDHLAAAMQAASADLDFEHAAVYRDRLAALSHV.

It belongs to the UvrC family. As to quaternary structure, interacts with UvrB in an incision complex.

The protein resides in the cytoplasm. In terms of biological role, the UvrABC repair system catalyzes the recognition and processing of DNA lesions. UvrC both incises the 5' and 3' sides of the lesion. The N-terminal half is responsible for the 3' incision and the C-terminal half is responsible for the 5' incision. The sequence is that of UvrABC system protein C from Brucella suis biovar 1 (strain 1330).